We begin with the raw amino-acid sequence, 690 residues long: Probable serine/threonine-protein kinase drkB (690 aa).

Residues 1–24 (MKVQIVFFSITVFIFVLFLLSVES) form the signal peptide. Residues 51 to 110 (DSKSSEHTTSSSSSSNSKNKGDSSSSSSNSGSSSNSIISGDSNSKDAPTTSSDSLSPATP) are disordered. The span at 57-96 (HTTSSSSSSNSKNKGDSSSSSSNSGSSSNSIISGDSNSKD) shows a compositional bias: low complexity. Residues 97–107 (APTTSSDSLSP) show a composition bias toward polar residues. Asn134, Asn180, Asn220, and Asn250 each carry an N-linked (GlcNAc...) asparagine glycan. The interval 287-335 (TITPTPTITPTPTITPTVTPTATPSTTPSTTPTTTPSTPTPTPTKSPYS) is disordered. Low complexity predominate over residues 296–323 (PTPTITPTVTPTATPSTTPSTTPTTTPS). Residues 346–366 (IIIASSITGGLLISIFSFVFI) form a helical membrane-spanning segment. Residues 391 to 644 (IKIGVRIGKG…EQCLEILESI (254 aa)) form the Protein kinase domain. ATP-binding positions include 397 to 405 (IGKGNFGEV) and Lys418. Asp514 serves as the catalytic Proton acceptor. Residues 649–690 (FDDIPVNNNNNNNSNNNENNNENNNNSDNNNNDINYSNRVIN) form a disordered region. Residues 655-681 (NNNNNNNSNNNENNNENNNNSDNNNND) show a composition bias toward low complexity.

The protein belongs to the protein kinase superfamily. TKL Ser/Thr protein kinase family.

It is found in the membrane. The catalysed reaction is L-seryl-[protein] + ATP = O-phospho-L-seryl-[protein] + ADP + H(+). It carries out the reaction L-threonyl-[protein] + ATP = O-phospho-L-threonyl-[protein] + ADP + H(+). This chain is Probable serine/threonine-protein kinase drkB (drkB), found in Dictyostelium discoideum (Social amoeba).